The chain runs to 305 residues: Ribonucleoside-diphosphate reductase small subunit (305 aa).

Residues Glu-64, Glu-94, and His-97 each contribute to the Fe cation site. The active site involves Tyr-101. A helical transmembrane segment spans residues 150–170 (ILLFLLVEGIFFISSFFSIGL). Glu-157, Glu-191, and His-194 together coordinate Fe cation.

The protein belongs to the ribonucleoside diphosphate reductase small chain family. As to quaternary structure, heterotetramer composed of a homodimer of the large subunit (R1) and a homodimer of the small subunit (R2). Larger multisubunit protein complex are also active, composed of (R1)n(R2)n. It depends on Fe cation as a cofactor.

It localises to the host membrane. It catalyses the reaction a 2'-deoxyribonucleoside 5'-diphosphate + [thioredoxin]-disulfide + H2O = a ribonucleoside 5'-diphosphate + [thioredoxin]-dithiol. In terms of biological role, ribonucleoside-diphosphate reductase holoenzyme provides the precursors necessary for viral DNA synthesis. Allows virus growth in non-dividing cells, as well as reactivation from latency in infected hosts. Catalyzes the biosynthesis of deoxyribonucleotides from the corresponding ribonucleotides. This Saimiri sciureus (Common squirrel monkey) protein is Ribonucleoside-diphosphate reductase small subunit.